Consider the following 386-residue polypeptide: Adiponectin receptor protein 2 (386 aa).

A disordered region spans residues 1–72; the sequence is MNEPAKHRLG…ECHDDNSQED (72 aa). The Cytoplasmic portion of the chain corresponds to 1–147; the sequence is MNEPAKHRLG…SIFRIHTETG (147 aa). Basic and acidic residues predominate over residues 15 to 31; the sequence is PEPDIRLRKGHQLDDTR. The segment covering 58–72 has biased composition (acidic residues); it reads SPEEPECHDDNSQED. The helical transmembrane segment at 148 to 168 threads the bilayer; sequence NIWTHLLGCVFFLCLGIFYMF. Residues 169–181 are Extracellular-facing; it reads RPNISFVAPLQEK. A helical membrane pass occupies residues 182–202; the sequence is VVFGLFFLGAILCLSFSWLFH. Zn(2+) is bound at residue His202. Residues 203 to 213 lie on the Cytoplasmic side of the membrane; it reads TVYCHSEGVSR. Residues 214 to 234 form a helical membrane-spanning segment; that stretch reads LFSKLDYSGIALLIMGSFVPW. Residues 235 to 245 are Extracellular-facing; that stretch reads LYYSFYCNPQP. A helical transmembrane segment spans residues 246–266; the sequence is CFIYLIVICVLGIAAIIVSQW. The Cytoplasmic portion of the chain corresponds to 267-273; sequence DMFATPQ. The chain crosses the membrane as a helical span at residues 274–294; it reads YRGVRAGVFVGLGLSGIIPTL. The Extracellular portion of the chain corresponds to 295–309; sequence HYVISEGFLKAATIG. A helical membrane pass occupies residues 310-330; sequence QIGWLMLMASLYITGAALYAA. Topologically, residues 331–348 are cytoplasmic; it reads RIPERFFPGKCDIWFHSH. Residues His348 and His352 each coordinate Zn(2+). The helical transmembrane segment at 349–369 threads the bilayer; it reads QLFHIFVVAGAFVHFHGVSNL. At 370-386 the chain is on the extracellular side; sequence QEFRFMIGGGCTEEDAL.

It belongs to the ADIPOR family. May form homooligomers and heterooligomers with ADIPOR1. Interacts with APPL2 (via BAR domain); ADIPOQ dissociates this interaction. As to expression, detected in liver and quadriceps muscle (at protein level). Highly expressed in liver. Highly expressed in white adipose tissue, and at intermediate levels in brown adipose tissue. Expressed at intermediate level in heart, kidney, lung and skeletal muscle. Weakly expressed in brain, spleen and testis.

The protein resides in the cell membrane. In terms of biological role, receptor for ADIPOQ, an essential hormone secreted by adipocytes that regulates glucose and lipid metabolism. Required for normal body fat and glucose homeostasis. ADIPOQ-binding activates a signaling cascade that leads to increased PPARA activity, and ultimately to increased fatty acid oxidation and glucose uptake. Has intermediate affinity for globular and full-length adiponectin. Required for normal revascularization after chronic ischemia caused by severing of blood vessels. This is Adiponectin receptor protein 2 from Mus musculus (Mouse).